We begin with the raw amino-acid sequence, 332 residues long: rRNA biogenesis protein rrp-36 (332 aa).

Disordered regions lie at residues 1–91 (MPAV…ASQL), 104–196 (GALK…SGKS), 243–262 (SMES…ELLS), and 312–332 (KKIA…AEDR). 3 stretches are compositionally biased toward acidic residues: residues 27-45 (EPDS…EEEG), 53-77 (DTEE…DSDA), and 117-127 (EDGSDDDEEKE). Basic and acidic residues-rich tracts occupy residues 128–142 (EPNW…MKAK) and 165–183 (RRRD…RDPR). The stretch at 212-274 (DYQEDEMKQL…KKKEKELIKQ (63 aa)) forms a coiled coil. The segment covering 315–332 (AGKEKKALPLARRTAEDR) has biased composition (basic and acidic residues).

Belongs to the RRP36 family. Associates with 90S and pre-40S pre-ribosomal particles.

It is found in the nucleus. Its subcellular location is the nucleolus. Its function is as follows. Component of the 90S pre-ribosome involved in the maturation of rRNAs. Required for early cleavages of the pre-RNAs in the 40S ribosomal subunit maturation pathway. The sequence is that of rRNA biogenesis protein rrp-36 (rrp-36) from Neurospora crassa (strain ATCC 24698 / 74-OR23-1A / CBS 708.71 / DSM 1257 / FGSC 987).